The chain runs to 235 residues: Glucosamine-6-phosphate deaminase (235 aa).

Residue D62 is the Proton acceptor; for enolization step of the active site. The active-site For ring-opening step is the N128. The active-site Proton acceptor; for ring-opening step is the H130. E135 acts as the For ring-opening step in catalysis.

It belongs to the glucosamine/galactosamine-6-phosphate isomerase family. NagB subfamily.

The catalysed reaction is alpha-D-glucosamine 6-phosphate + H2O = beta-D-fructose 6-phosphate + NH4(+). It functions in the pathway amino-sugar metabolism; N-acetylneuraminate degradation; D-fructose 6-phosphate from N-acetylneuraminate: step 5/5. Catalyzes the reversible isomerization-deamination of glucosamine 6-phosphate (GlcN6P) to form fructose 6-phosphate (Fru6P) and ammonium ion. This Streptococcus pneumoniae serotype 2 (strain D39 / NCTC 7466) protein is Glucosamine-6-phosphate deaminase.